Consider the following 324-residue polypeptide: ATP-dependent 6-phosphofructokinase (324 aa).

Residue G15 coordinates ATP. 25–29 (RGVVR) lines the ADP pocket. ATP contacts are provided by residues 76–77 (RF) and 106–109 (GDGS). Mg(2+) is bound at residue D107. 130 to 132 (TID) serves as a coordination point for substrate. D132 (proton acceptor) is an active-site residue. Residue R159 participates in ADP binding. Substrate-binding positions include R167 and 174-176 (MGR). Residues 190–192 (GCE), K216, and 218–220 (KRH) contribute to the ADP site. Substrate contacts are provided by residues E227, R248, and 254 to 257 (HIQR).

It belongs to the phosphofructokinase type A (PFKA) family. ATP-dependent PFK group I subfamily. Prokaryotic clade 'B1' sub-subfamily. Homotetramer. Requires Mg(2+) as cofactor.

The protein resides in the cytoplasm. It carries out the reaction beta-D-fructose 6-phosphate + ATP = beta-D-fructose 1,6-bisphosphate + ADP + H(+). Its pathway is carbohydrate degradation; glycolysis; D-glyceraldehyde 3-phosphate and glycerone phosphate from D-glucose: step 3/4. Allosterically activated by ADP and other diphosphonucleosides, and allosterically inhibited by phosphoenolpyruvate. Functionally, catalyzes the phosphorylation of D-fructose 6-phosphate to fructose 1,6-bisphosphate by ATP, the first committing step of glycolysis. This chain is ATP-dependent 6-phosphofructokinase, found in Haemophilus ducreyi (strain 35000HP / ATCC 700724).